The sequence spans 526 residues: MSGYKVEVDKRRTFAIISHPDAGKTTITEKVLLFGNALQKAGTVKGKKSGQHAKSDWMEMEKDRGISITTSVMQFPYSDALVNLLDTPGHEDFSEDTYRTLTAVDSCLMVIDSAKGVEQRTIKLMEVTRLRDTPIVTFMNKLDRDIRDPIELMDEVEEVLNIKCAPITWPIGAGKEFKGVYHLLRDEVILYQGGMGHTIQDSRVIKGLDNPELDEAIGSYAAEIRDEMELVVGASHEFDHQQFLKGELTPVYFGTALGNFGVDHILDGIVEWAPVPQPRETEIREVQPEEEKFSGFVFKIQANMDPKHRDRVAFMRICSGRYEQGMKMHHVRLGKDVNVSDALTFMAGDRNRAEAAYPGDIIGLHNHGTIRIGDTFTQGEKLRFTGVPNFAPEMFRRIRLKDPLKQKQLLKGLVQLSEEGAVQVFRPLDSNDLIVGAVGVLQFEVVVGRLKTEYKVEAIYEAISVATARWVYCDDHKKLDEFKRKCSMNLALDGGDNLTYIAPTMVNLNLSMERYPDIEFAKTREN.

Residues 9 to 277 (DKRRTFAIIS…GIVEWAPVPQ (269 aa)) enclose the tr-type G domain. GTP is bound by residues 18 to 25 (SHPDAGKT), 86 to 90 (DTPGH), and 140 to 143 (NKLD).

Belongs to the TRAFAC class translation factor GTPase superfamily. Classic translation factor GTPase family. PrfC subfamily.

It localises to the cytoplasm. Increases the formation of ribosomal termination complexes and stimulates activities of RF-1 and RF-2. It binds guanine nucleotides and has strong preference for UGA stop codons. It may interact directly with the ribosome. The stimulation of RF-1 and RF-2 is significantly reduced by GTP and GDP, but not by GMP. In Shewanella pealeana (strain ATCC 700345 / ANG-SQ1), this protein is Peptide chain release factor 3.